We begin with the raw amino-acid sequence, 721 residues long: MVERIVNSEDVSLLVSGRQSNPHKFLGIVSENSSQDRIILFRPGAHSVVVELQGNIAHAQHHHSGIFSLTAPKGTLPQDYRIYHQNGLLAHDPYAFPPLWGEVDSFLFHQGTHYKIYECMGAIPYNVQGISGVLFVVWAPHAQRVSVVGDFNFWNGLVNPLRKVSDLGVWELFIPGLEEGTLYKWEIVSASGEVLIKTDPYGKRFDVPPHAPSRVVDSDRYTWHDAAWMEKRKHRGDQPLAIYEVHVGSWQWHEGKPLGYRELAKKLAAYCKEMHYTHVELLPVTEHPLNESWGYQVTGYYAPTCRYGTPEDFQFFVDHLHRENIGVILDWVPGHFPTDGFALAHFDGEALYESIENHEPLHPHWRTYTFDYRCNEVVNFLLGSALFWLDKMHIDGLRVDAVTSMLYLDYGRQEGEWSPNIYGGRENLQAIEFIKHLNSVVHREFPGVLTFAEESTDFPKVTQAVAQGGLGFDYKWNLGWMHDTFRYIQVDPLFRSYHHKDLTFSLWYAFNERYLLPLSHDEVVHGKGSLLQKMPGDTWTKFAHMRLLLSYHICQPGKKLLFMGGEFAQGKEWTPDSPLDWHLLDHPDHAYLHKCVARMNALYCDLPYFWKGDGKQGSFRWVDFKDTENHVIAYYRFSGEDRSSALLCVHHFSSGYFPSYVLYCQDIHSCQLLFNSDDCCFGGSGKGNRQPVLCLDQHVSWGIDIELPPLATLIFHVDFVN.

D400 functions as the Nucleophile in the catalytic mechanism. The active-site Proton donor is the E453.

It belongs to the glycosyl hydrolase 13 family. GlgB subfamily. As to quaternary structure, monomer.

It catalyses the reaction Transfers a segment of a (1-&gt;4)-alpha-D-glucan chain to a primary hydroxy group in a similar glucan chain.. The protein operates within glycan biosynthesis; glycogen biosynthesis. Catalyzes the formation of the alpha-1,6-glucosidic linkages in glycogen by scission of a 1,4-alpha-linked oligosaccharide from growing alpha-1,4-glucan chains and the subsequent attachment of the oligosaccharide to the alpha-1,6 position. This chain is 1,4-alpha-glucan branching enzyme GlgB, found in Chlamydia abortus (strain DSM 27085 / S26/3) (Chlamydophila abortus).